Here is a 275-residue protein sequence, read N- to C-terminus: Coagulation factor IX (275 aa).

Position 23 is a sulfotyrosine (Y23). N25 carries an N-linked (GlcNAc...) asparagine glycan. T27 is subject to Phosphothreonine. Residue N35 is glycosylated (N-linked (GlcNAc...) asparagine). T47 carries an O-linked (GalNAc...) threonine glycan. A Peptidase S1 domain is found at 49-275; sequence IVGGENAKPG…YTRVSWYVNW (227 aa). Residues C74 and C90 are joined by a disulfide bond. Residue H89 is the Charge relay system of the active site. N96 carries N-linked (GlcNAc...) asparagine glycosylation. Residues E103, N105, E108, E110, and E113 each contribute to the Ca(2+) site. A glycan (N-linked (GlcNAc...) asparagine) is linked at N128. D137 functions as the Charge relay system in the catalytic mechanism. Cystine bridges form between C204-C218 and C229-C257. S233 serves as the catalytic Charge relay system.

It belongs to the peptidase S1 family. As to quaternary structure, heterodimer of a light chain and a heavy chain; disulfide-linked. Interacts (inactive and activated) with F11 (activated) in calcium-dependent manner. Interacts with SERPINC1. Activated by factor XIa, which excises the activation peptide. The propeptide can also be removed by snake venom protease. Activated by coagulation factor VIIa-tissue factor (F7-F3) complex in calcium-dependent manner.

It localises to the secreted. The enzyme catalyses Selective cleavage of Arg-|-Ile bond in factor X to form factor Xa.. Its function is as follows. Factor IX is a vitamin K-dependent plasma protein that participates in the intrinsic pathway of blood coagulation by converting factor X to its active form in the presence of Ca(2+) ions, phospholipids, and factor VIIIa. The protein is Coagulation factor IX (F9) of Oryctolagus cuniculus (Rabbit).